A 526-amino-acid chain; its full sequence is Vang-like protein 1 (526 aa).

The span at 1-15 shows a compositional bias: low complexity; that stretch reads MDTESTYSGYSYYSS. Residues 1–87 form a disordered region; sequence MDTESTYSGY…TTAITGTSEH (87 aa). Over 1–114 the chain is Cytoplasmic; the sequence is MDTESTYSGY…VGLDCKRYLG (114 aa). The span at 75 to 87 shows a compositional bias: polar residues; sequence GETTTAITGTSEH. Phosphoserine occurs at positions 88 and 90. Residues 115–135 form a helical membrane-spanning segment; that stretch reads LTVASFLGLLVFLTPIAFILL. The Extracellular segment spans residues 136-153; it reads PQILWREELKPCGAICEG. Residues 154 to 174 traverse the membrane as a helical segment; it reads LLISVSFKLLILLIGTWALFF. Residues 175 to 184 lie on the Cytoplasmic side of the membrane; the sequence is RKQRADVPRV. The chain crosses the membrane as a helical span at residues 185 to 205; sequence FVFRALLLVLIFLFVVSYWLF. The Extracellular segment spans residues 206 to 224; sequence YGVRILDSRDQNYKDIVQY. A helical transmembrane segment spans residues 225-245; it reads AVSLVDALLFIHYLAIVLLEL. The Cytoplasmic portion of the chain corresponds to 246–526; sequence RQLQPMFTLQ…VLRLQSETSV (281 aa).

Belongs to the Vang family. In terms of assembly, heterodimer with Vangl2. Interacts through its C-terminal region with the N-terminal half of DVL1, DVL2 and DVL3. The PDZ domain of DVL1, DVL2 and DVL3 is required for the interaction.

It localises to the cell membrane. In Mus musculus (Mouse), this protein is Vang-like protein 1 (Vangl1).